The primary structure comprises 279 residues: Fatty acid metabolism regulator protein (279 aa).

In terms of domain architecture, HTH gntR-type spans 6–74; it reads KSPAGFAEKY…HGKPTKVNQF (69 aa). Residues 34–53 constitute a DNA-binding region (H-T-H motif); that stretch reads ERELSELIGVTRTTLREVLQ.

In terms of assembly, homodimer.

It is found in the cytoplasm. Multifunctional regulator of fatty acid metabolism. In Vibrio parahaemolyticus serotype O3:K6 (strain RIMD 2210633), this protein is Fatty acid metabolism regulator protein.